A 911-amino-acid chain; its full sequence is Protein translocase subunit SecA (911 aa).

Residues glutamine 87, 105–109 (GEGKT), and aspartate 512 each bind ATP. Residues 865 to 892 (AAEQDGAEEGAVATATAPVRSENKVGRN) form a disordered region. Over residues 873–883 (EGAVATATAPV) the composition is skewed to low complexity. Zn(2+) contacts are provided by cysteine 895, cysteine 897, cysteine 906, and histidine 907.

The protein belongs to the SecA family. In terms of assembly, monomer and homodimer. Part of the essential Sec protein translocation apparatus which comprises SecA, SecYEG and auxiliary proteins SecDF-YajC and YidC. It depends on Zn(2+) as a cofactor.

The protein resides in the cell inner membrane. Its subcellular location is the cytoplasm. It catalyses the reaction ATP + H2O + cellular proteinSide 1 = ADP + phosphate + cellular proteinSide 2.. Functionally, part of the Sec protein translocase complex. Interacts with the SecYEG preprotein conducting channel. Has a central role in coupling the hydrolysis of ATP to the transfer of proteins into and across the cell membrane, serving both as a receptor for the preprotein-SecB complex and as an ATP-driven molecular motor driving the stepwise translocation of polypeptide chains across the membrane. This Ectopseudomonas mendocina (strain ymp) (Pseudomonas mendocina) protein is Protein translocase subunit SecA.